Consider the following 174-residue polypeptide: CDP-archaeol synthase (174 aa).

A run of 4 helical transmembrane segments spans residues 51–71, 74–94, 112–132, and 136–156; these read LIGLLQILLAPHIAPYLAGFI, SLLVGYSYIALITMPFGALLG, MLPIADQLDFVAGAWVLTFLL, and WLLANFTIWVAIAVILIIPVF.

It belongs to the CDP-archaeol synthase family. Requires Mg(2+) as cofactor.

The protein localises to the cell membrane. It carries out the reaction 2,3-bis-O-(geranylgeranyl)-sn-glycerol 1-phosphate + CTP + H(+) = CDP-2,3-bis-O-(geranylgeranyl)-sn-glycerol + diphosphate. Its pathway is membrane lipid metabolism; glycerophospholipid metabolism. Its function is as follows. Catalyzes the formation of CDP-2,3-bis-(O-geranylgeranyl)-sn-glycerol (CDP-archaeol) from 2,3-bis-(O-geranylgeranyl)-sn-glycerol 1-phosphate (DGGGP) and CTP. This reaction is the third ether-bond-formation step in the biosynthesis of archaeal membrane lipids. The sequence is that of CDP-archaeol synthase from Methanocella arvoryzae (strain DSM 22066 / NBRC 105507 / MRE50).